The primary structure comprises 231 residues: Acyltransferase PGAP2 (231 aa).

Residues 1 to 22 lie on the Cytoplasmic side of the membrane; sequence MQQVPYGSVDRDKPLIRVPFTR. Residues 23 to 43 traverse the membrane as a helical segment; sequence LAVITVCLPLLGLVACIVLAM. The Lumenal segment spans residues 44–78; it reads LYHYNDATYTHCQVPNYLPSISAAISLTPERYIWR. A helical membrane pass occupies residues 79 to 99; the sequence is FSIGLHSAPRFLVAAAYLSFY. The Cytoplasmic portion of the chain corresponds to 100–110; the sequence is RGRFSRRLTEQ. A helical membrane pass occupies residues 111–131; sequence LLSGFTFLLALSENVGLLLLT. Residues 132–146 are Lumenal-facing; that stretch reads YVSSTETYSVHKSGF. Residues 147–167 traverse the membrane as a helical segment; that stretch reads ILFIGSSLFHMLCTCKLWSLI. The Cytoplasmic segment spans residues 168–179; it reads VKYSISSEEMMS. Residues 180–200 form a helical membrane-spanning segment; it reads YWFKLRLFLFNGGCCVLAVYF. The Lumenal segment spans residues 201–231; it reads YRRHNTYCEEGITHASRCVSIWWCCPTWPST.

This sequence belongs to the PGAP2 family.

The protein resides in the golgi apparatus membrane. Functionally, involved in the fatty acid remodeling steps of GPI-anchor maturation where the unsaturated acyl chain at sn-2 of inositol phosphate is replaced by a saturated stearoyl chain. May catalyze the second step of the fatty acid remodeling, by reacylating a lyso-GPI intermediate at sn-2 of inositol phosphate by a saturated chain. The fatty acid remodeling steps is critical for the integration of GPI-APs into lipid rafts. This chain is Acyltransferase PGAP2, found in Danio rerio (Zebrafish).